Reading from the N-terminus, the 325-residue chain is 4-hydroxy-3-methylbut-2-enyl diphosphate reductase (325 aa).

Cys25 contributes to the [4Fe-4S] cluster binding site. The (2E)-4-hydroxy-3-methylbut-2-enyl diphosphate site is built by His54 and His87. Dimethylallyl diphosphate-binding residues include His54 and His87. Isopentenyl diphosphate-binding residues include His54 and His87. Residue Cys109 participates in [4Fe-4S] cluster binding. His137 contacts (2E)-4-hydroxy-3-methylbut-2-enyl diphosphate. His137 is a dimethylallyl diphosphate binding site. Residue His137 coordinates isopentenyl diphosphate. Glu139 acts as the Proton donor in catalysis. Residue Thr179 coordinates (2E)-4-hydroxy-3-methylbut-2-enyl diphosphate. Cys209 contacts [4Fe-4S] cluster. The (2E)-4-hydroxy-3-methylbut-2-enyl diphosphate site is built by Ser237, Ser238, Asn239, and Ser282. Dimethylallyl diphosphate contacts are provided by Ser237, Ser238, Asn239, and Ser282. 4 residues coordinate isopentenyl diphosphate: Ser237, Ser238, Asn239, and Ser282.

It belongs to the IspH family. [4Fe-4S] cluster serves as cofactor.

The catalysed reaction is isopentenyl diphosphate + 2 oxidized [2Fe-2S]-[ferredoxin] + H2O = (2E)-4-hydroxy-3-methylbut-2-enyl diphosphate + 2 reduced [2Fe-2S]-[ferredoxin] + 2 H(+). It carries out the reaction dimethylallyl diphosphate + 2 oxidized [2Fe-2S]-[ferredoxin] + H2O = (2E)-4-hydroxy-3-methylbut-2-enyl diphosphate + 2 reduced [2Fe-2S]-[ferredoxin] + 2 H(+). It functions in the pathway isoprenoid biosynthesis; dimethylallyl diphosphate biosynthesis; dimethylallyl diphosphate from (2E)-4-hydroxy-3-methylbutenyl diphosphate: step 1/1. It participates in isoprenoid biosynthesis; isopentenyl diphosphate biosynthesis via DXP pathway; isopentenyl diphosphate from 1-deoxy-D-xylulose 5-phosphate: step 6/6. Its function is as follows. Catalyzes the conversion of 1-hydroxy-2-methyl-2-(E)-butenyl 4-diphosphate (HMBPP) into a mixture of isopentenyl diphosphate (IPP) and dimethylallyl diphosphate (DMAPP). Acts in the terminal step of the DOXP/MEP pathway for isoprenoid precursor biosynthesis. The polypeptide is 4-hydroxy-3-methylbut-2-enyl diphosphate reductase (Corynebacterium glutamicum (strain ATCC 13032 / DSM 20300 / JCM 1318 / BCRC 11384 / CCUG 27702 / LMG 3730 / NBRC 12168 / NCIMB 10025 / NRRL B-2784 / 534)).